A 342-amino-acid polypeptide reads, in one-letter code: UDP-N-acetylenolpyruvoylglucosamine reductase (342 aa).

The 171-residue stretch at 13–183 (IDHNAQHIVC…VAVGLRLPKE (171 aa)) folds into the FAD-binding PCMH-type domain. Arg-159 is an active-site residue. Tyr-190 contributes to the substrate binding site. The active-site Proton donor is the Ser-229. Glu-325 is a catalytic residue.

This sequence belongs to the MurB family. Monomer. FAD is required as a cofactor.

The protein localises to the cytoplasm. The catalysed reaction is UDP-N-acetyl-alpha-D-muramate + NADP(+) = UDP-N-acetyl-3-O-(1-carboxyvinyl)-alpha-D-glucosamine + NADPH + H(+). It functions in the pathway cell wall biogenesis; peptidoglycan biosynthesis. In terms of biological role, cell wall formation. This is UDP-N-acetylenolpyruvoylglucosamine reductase from Escherichia coli O157:H7.